Reading from the N-terminus, the 86-residue chain is Large ribosomal subunit protein bL31B (86 aa).

It belongs to the bacterial ribosomal protein bL31 family. Type B subfamily. Part of the 50S ribosomal subunit.

The chain is Large ribosomal subunit protein bL31B from Burkholderia cenocepacia (strain ATCC BAA-245 / DSM 16553 / LMG 16656 / NCTC 13227 / J2315 / CF5610) (Burkholderia cepacia (strain J2315)).